The sequence spans 478 residues: Cytochrome c-552 (478 aa).

Residues 1 to 26 form the signal peptide; it reads MARTILRARRFFSLILPFFFISSVYA. H94 is a heme c binding site. Positions 122, 125, and 126 each coordinate heme. 6 residues coordinate heme c: C160, C163, H164, C209, C212, and H213. Residues E215, Y216, K261, and Q263 each coordinate Ca(2+). Y216 serves as a coordination point for substrate. H264 is a binding site for substrate. Heme c is bound by residues H275, C282, C285, H286, H301, C314, C317, H318, and H393.

Belongs to the cytochrome c-552 family. Requires Ca(2+) as cofactor. It depends on heme c as a cofactor.

The protein resides in the periplasm. The enzyme catalyses 6 Fe(III)-[cytochrome c] + NH4(+) + 2 H2O = 6 Fe(II)-[cytochrome c] + nitrite + 8 H(+). It functions in the pathway nitrogen metabolism; nitrate reduction (assimilation). Functionally, catalyzes the reduction of nitrite to ammonia, consuming six electrons in the process. The chain is Cytochrome c-552 from Citrobacter koseri (strain ATCC BAA-895 / CDC 4225-83 / SGSC4696).